Consider the following 258-residue polypeptide: Ribosomal RNA small subunit methyltransferase A (258 aa).

The S-adenosyl-L-methionine site is built by Asn12, Leu14, Gly38, Glu59, Asp83, and Asn100.

Belongs to the class I-like SAM-binding methyltransferase superfamily. rRNA adenine N(6)-methyltransferase family. RsmA subfamily.

Its subcellular location is the cytoplasm. The enzyme catalyses adenosine(1518)/adenosine(1519) in 16S rRNA + 4 S-adenosyl-L-methionine = N(6)-dimethyladenosine(1518)/N(6)-dimethyladenosine(1519) in 16S rRNA + 4 S-adenosyl-L-homocysteine + 4 H(+). In terms of biological role, specifically dimethylates two adjacent adenosines (A1518 and A1519) in the loop of a conserved hairpin near the 3'-end of 16S rRNA in the 30S particle. May play a critical role in biogenesis of 30S subunits. This Metamycoplasma arthritidis (strain 158L3-1) (Mycoplasma arthritidis) protein is Ribosomal RNA small subunit methyltransferase A.